The primary structure comprises 250 residues: GILT-like protein 1 (250 aa).

Positions 1–21 are cleaved as a signal peptide; sequence MSHKIAAVCLLMSCLIATAYS. N-linked (GlcNAc...) asparagine glycosylation occurs at Asn-157.

It belongs to the GILT family. In terms of processing, conjugated to URM1, a ubiquitin-like protein.

The protein localises to the secreted. Functionally, involved in the immune response to bacterial infection. The sequence is that of GILT-like protein 1 from Drosophila melanogaster (Fruit fly).